The primary structure comprises 288 residues: Acetyl-coenzyme A carboxylase carboxyl transferase subunit beta (288 aa).

The CoA carboxyltransferase N-terminal domain occupies 34-288; the sequence is LFAKCPACKH…HLVAFHGGVS (255 aa). Zn(2+) contacts are provided by C38, C41, C56, and C59. The C4-type zinc finger occupies 38–59; that stretch reads CPACKHMIYQKDLGPAKICPTC.

It belongs to the AccD/PCCB family. Acetyl-CoA carboxylase is a heterohexamer composed of biotin carboxyl carrier protein (AccB), biotin carboxylase (AccC) and two subunits each of ACCase subunit alpha (AccA) and ACCase subunit beta (AccD). It depends on Zn(2+) as a cofactor.

Its subcellular location is the cytoplasm. The catalysed reaction is N(6)-carboxybiotinyl-L-lysyl-[protein] + acetyl-CoA = N(6)-biotinyl-L-lysyl-[protein] + malonyl-CoA. Its pathway is lipid metabolism; malonyl-CoA biosynthesis; malonyl-CoA from acetyl-CoA: step 1/1. Component of the acetyl coenzyme A carboxylase (ACC) complex. Biotin carboxylase (BC) catalyzes the carboxylation of biotin on its carrier protein (BCCP) and then the CO(2) group is transferred by the transcarboxylase to acetyl-CoA to form malonyl-CoA. In Streptococcus equi subsp. zooepidemicus (strain MGCS10565), this protein is Acetyl-coenzyme A carboxylase carboxyl transferase subunit beta.